A 258-amino-acid polypeptide reads, in one-letter code: UPF0246 protein VP0504 (258 aa).

The protein belongs to the UPF0246 family.

This Vibrio parahaemolyticus serotype O3:K6 (strain RIMD 2210633) protein is UPF0246 protein VP0504.